The sequence spans 84 residues: Small ribosomal subunit protein uS17 (84 aa).

Belongs to the universal ribosomal protein uS17 family. Part of the 30S ribosomal subunit.

One of the primary rRNA binding proteins, it binds specifically to the 5'-end of 16S ribosomal RNA. In Borrelia duttonii (strain Ly), this protein is Small ribosomal subunit protein uS17.